Reading from the N-terminus, the 728-residue chain is Prolyl 3-hydroxylase 1 (728 aa).

An N-terminal signal peptide occupies residues 1-14 (MVAVAAAAASRATA). 4 TPR repeats span residues 25-58 (PDLLYAEGTAAYARGDWPGVVLNMERALRSRAAL), 135-168 (RSPYNYLQVAYFKINKLEKAVAAAHTFFVGNPEH), 197-230 (HMHEFRLGVRLYSEEKPLEAVPHLEAALQEYFVA), and 293-326 (PSHYNYLQFAYYNIGNYTQAIECAKTYLLFFPND). An N-linked (GlcNAc...) asparagine glycan is attached at Asn-308. Residues 393–431 (KRLQEKQKSERETAVRISQEIGNLMKEIETLVEEKTKES) adopt a coiled-coil conformation. Residues Asn-450, Asn-459, and Asn-532 are each glycosylated (N-linked (GlcNAc...) asparagine). Residues 556–670 (SHLVCRTAIE…RCAIALWFTL (115 aa)) enclose the Fe2OG dioxygenase domain. 3 residues coordinate Fe cation: His-579, Asp-581, and His-651. Arg-661 is a catalytic residue. Residues 691–728 (SPEEVDLPQEQPLPDQQGSPKPGEESLSDRESQPKDEL) are disordered. The span at 698–707 (PQEQPLPDQQ) shows a compositional bias: low complexity. Basic and acidic residues predominate over residues 712 to 728 (PGEESLSDRESQPKDEL). Positions 725–728 (KDEL) match the Prevents secretion from ER motif.

It belongs to the leprecan family. It depends on Fe cation as a cofactor. L-ascorbate serves as cofactor. In terms of processing, O-glycosylated; chondroitin sulfate. Expressed in basement membranes of cardiac muscle, skeletal muscle, central nervous system, intestinal tract, trachea, ear, skin, liver and kidney. In kidney, localizes to the glomerular basement membrane, mesangial matrix and Bowman's capsule of the nephron. In the renal parenchyma, expressed in the basement membranes of tubules and blood vessels. In the ear and trachea, localizes to the perimeter of resident chondrocytes in lacunae.

The protein resides in the endoplasmic reticulum. It is found in the secreted. The protein localises to the extracellular space. It localises to the extracellular matrix. It carries out the reaction L-prolyl-[collagen] + 2-oxoglutarate + O2 = trans-3-hydroxy-L-prolyl-[collagen] + succinate + CO2. Its function is as follows. Basement membrane-associated chondroitin sulfate proteoglycan (CSPG). Has prolyl 3-hydroxylase activity catalyzing the post-translational formation of 3-hydroxyproline in -Xaa-Pro-Gly- sequences in collagens, especially types IV and V. May be involved in the secretory pathway of cells. Has growth suppressive activity in fibroblasts. The chain is Prolyl 3-hydroxylase 1 from Rattus norvegicus (Rat).